Here is a 404-residue protein sequence, read N- to C-terminus: Ubiquitin-like modifier-activating enzyme 5 (404 aa).

Serine 45 carries the post-translational modification Phosphoserine. Residues glycine 83, aspartate 104, lysine 127, asparagine 150, and asparagine 184 each contribute to the ATP site. Residues cysteine 226 and cysteine 229 each coordinate Zn(2+). Residue cysteine 250 is the Glycyl thioester intermediate of the active site. Residues cysteine 303 and cysteine 308 each contribute to the Zn(2+) site. Positions 334–346 (IIHEDNEWGIELV) match the UFM1-interacting sequence (UIS) motif. The tract at residues 347–377 (SEVSEEELKNSSGPVPDLPEGITVAYTIPKK) is linker. Residues serine 358 and serine 393 each carry the phosphoserine modification. The short motif at 389–404 (DSGESLEDLMAKMKNM) is the UFC1-binding sequence (UFC) element.

The protein belongs to the ubiquitin-activating E1 family. UBA5 subfamily. Homodimer; homodimerization is required for UFM1 activation. Interacts (via UIS motif) with UFM1; binds UFM1 via a trans-binding mechanism in which UFM1 interacts with distinct sites in both subunits of the UBA5 homodimer. Interacts (via C-terminus) with UFC1. Interacts (via UIS motif) with GABARAPL2 and, with lower affinity, with GABARAP and GABARAPL1.

It localises to the cytoplasm. It is found in the nucleus. The protein localises to the endoplasmic reticulum membrane. The protein resides in the golgi apparatus. Functionally, E1-like enzyme which specifically catalyzes the first step in ufmylation. Activates UFM1 by first adenylating its C-terminal glycine residue with ATP, and thereafter linking this residue to the side chain of a cysteine residue in E1, yielding a UFM1-E1 thioester and free AMP. Activates UFM1 via a trans-binding mechanism, in which UFM1 interacts with distinct sites in both subunits of the UBA5 homodimer. Trans-binding also promotes stabilization of the UBA5 homodimer, and enhances ATP-binding. Transfer of UFM1 from UBA5 to the E2-like enzyme UFC1 also takes place using a trans mechanism. Ufmylation plays a key role in various processes, such as ribosome recycling, response to DNA damage, interferon response or reticulophagy (also called ER-phagy). Ufmylation is essential for erythroid differentiation of both megakaryocytes and erythrocytes. The sequence is that of Ubiquitin-like modifier-activating enzyme 5 from Pongo abelii (Sumatran orangutan).